Here is a 158-residue protein sequence, read N- to C-terminus: uncharacterized protein (158 aa).

The HTH asnC-type domain occupies 12–73; the sequence is LDEIDRAILR…LINPFKAGYE (62 aa). Residues 31-50 constitute a DNA-binding region (H-T-H motif); that stretch reads YSEISRRINVPESTVRARVN.

This is an uncharacterized protein from Pyrococcus horikoshii (strain ATCC 700860 / DSM 12428 / JCM 9974 / NBRC 100139 / OT-3).